The sequence spans 577 residues: Proline--tRNA ligase (577 aa).

This sequence belongs to the class-II aminoacyl-tRNA synthetase family. ProS type 1 subfamily. In terms of assembly, homodimer.

It localises to the cytoplasm. It carries out the reaction tRNA(Pro) + L-proline + ATP = L-prolyl-tRNA(Pro) + AMP + diphosphate. Its function is as follows. Catalyzes the attachment of proline to tRNA(Pro) in a two-step reaction: proline is first activated by ATP to form Pro-AMP and then transferred to the acceptor end of tRNA(Pro). As ProRS can inadvertently accommodate and process non-cognate amino acids such as alanine and cysteine, to avoid such errors it has two additional distinct editing activities against alanine. One activity is designated as 'pretransfer' editing and involves the tRNA(Pro)-independent hydrolysis of activated Ala-AMP. The other activity is designated 'posttransfer' editing and involves deacylation of mischarged Ala-tRNA(Pro). The misacylated Cys-tRNA(Pro) is not edited by ProRS. In Chlamydia abortus (strain DSM 27085 / S26/3) (Chlamydophila abortus), this protein is Proline--tRNA ligase.